Consider the following 568-residue polypeptide: Putative U-box domain-containing protein 55 (568 aa).

The stretch at 217–464 (QSESDRNDQL…KVAAEKDAAS (248 aa)) forms a coiled coil. The U-box domain occupies 496–568 (QPPSYFICPI…AIQEWLQRNS (73 aa)).

The enzyme catalyses S-ubiquitinyl-[E2 ubiquitin-conjugating enzyme]-L-cysteine + [acceptor protein]-L-lysine = [E2 ubiquitin-conjugating enzyme]-L-cysteine + N(6)-ubiquitinyl-[acceptor protein]-L-lysine.. Its pathway is protein modification; protein ubiquitination. Functions as an E3 ubiquitin ligase. The polypeptide is Putative U-box domain-containing protein 55 (PUB55) (Arabidopsis thaliana (Mouse-ear cress)).